A 399-amino-acid polypeptide reads, in one-letter code: S-adenosylmethionine synthase (399 aa).

Residue H17 participates in ATP binding. D19 contributes to the Mg(2+) binding site. E45 contributes to the K(+) binding site. The L-methionine site is built by E58 and Q101. Residues 101 to 111 (QSPDIAQGVDE) are flexible loop. ATP-binding positions include 177–179 (DAK), 244–245 (RF), D253, 259–260 (RK), A276, and K280. Residue D253 coordinates L-methionine. L-methionine is bound at residue K284.

The protein belongs to the AdoMet synthase family. As to quaternary structure, homotetramer; dimer of dimers. Mg(2+) is required as a cofactor. Requires K(+) as cofactor.

Its subcellular location is the cytoplasm. It catalyses the reaction L-methionine + ATP + H2O = S-adenosyl-L-methionine + phosphate + diphosphate. Its pathway is amino-acid biosynthesis; S-adenosyl-L-methionine biosynthesis; S-adenosyl-L-methionine from L-methionine: step 1/1. Catalyzes the formation of S-adenosylmethionine (AdoMet) from methionine and ATP. The overall synthetic reaction is composed of two sequential steps, AdoMet formation and the subsequent tripolyphosphate hydrolysis which occurs prior to release of AdoMet from the enzyme. This is S-adenosylmethionine synthase from Listeria monocytogenes serovar 1/2a (strain ATCC BAA-679 / EGD-e).